A 124-amino-acid polypeptide reads, in one-letter code: Non-structural protein 2 (124 aa).

Residues Asp121–Pro124 carry the DLNP; interaction with MAP1B motif.

The protein belongs to the pneumovirus non-structural protein 2 family. As to quaternary structure, monomer (instable). Homomultimer. Heteromultimer with NS1. Interacts with host RIGI (via N-terminus); this interaction prevents host signaling pathway involved in interferon production. Interacts with host MAP1B/microtubule-associated protein 1B.

The protein resides in the host mitochondrion. Functionally, plays a major role in antagonizing the type I IFN-mediated antiviral response. Acts cooperatively with NS1 to repress activation and nuclear translocation of host IFN-regulatory factor IRF3. Interacts with the host cytoplasmic sensor of viral nucleic acids RIGI and prevents the interaction with its downstream partner MAVS. Together with NS2, participates in the proteasomal degradation of host STAT2, IRF3, IRF7, TBK1 and RIGI through a NS-degradasome involving CUL2 and Elongin-C. The degradasome requires an intact mitochondrial MAVS. Induces host SOCS1 expression. Induces activation of NF-kappa-B. Suppresses premature apoptosis by an NF-kappa-B-dependent, interferon-independent mechanism promoting continued viral replication. The protein is Non-structural protein 2 (1B) of Homo sapiens (Human).